We begin with the raw amino-acid sequence, 498 residues long: Probable malate:quinone oxidoreductase (498 aa).

The protein belongs to the MQO family. FAD serves as cofactor.

It carries out the reaction (S)-malate + a quinone = a quinol + oxaloacetate. It functions in the pathway carbohydrate metabolism; tricarboxylic acid cycle; oxaloacetate from (S)-malate (quinone route): step 1/1. The chain is Probable malate:quinone oxidoreductase from Prochlorococcus marinus (strain AS9601).